The sequence spans 261 residues: MLHIADTILTSRLLTGTGKFATPELMLAALEASGSQLVTMAMKRVDLNGGNDAILAPLRQLGIKLLPNTSGAKTADEAVFAARLAREALGTHWLKLEIHPDVKYLLPDPIETLKAAEQLVKEGFTVLPYCGADPVLCKRLEEVGCAAVMPLGAPIGSNQGLQTRDFLRIIIEQARIPVIVDAGIGAPSHAADALEMGADGVLVNTAIAVARDPVAMARAFRLAVNAGGLARQAGQGNKQFVASATSPLTGFLHQQTEGAER.

The active-site Schiff-base intermediate with DXP is Lys-95. Residues Gly-156, 182-183 (AG), and 204-205 (NT) each bind 1-deoxy-D-xylulose 5-phosphate.

It belongs to the ThiG family. Homotetramer. Forms heterodimers with either ThiH or ThiS.

The protein resides in the cytoplasm. It catalyses the reaction [ThiS sulfur-carrier protein]-C-terminal-Gly-aminoethanethioate + 2-iminoacetate + 1-deoxy-D-xylulose 5-phosphate = [ThiS sulfur-carrier protein]-C-terminal Gly-Gly + 2-[(2R,5Z)-2-carboxy-4-methylthiazol-5(2H)-ylidene]ethyl phosphate + 2 H2O + H(+). Its pathway is cofactor biosynthesis; thiamine diphosphate biosynthesis. Catalyzes the rearrangement of 1-deoxy-D-xylulose 5-phosphate (DXP) to produce the thiazole phosphate moiety of thiamine. Sulfur is provided by the thiocarboxylate moiety of the carrier protein ThiS. In vitro, sulfur can be provided by H(2)S. The polypeptide is Thiazole synthase (Pectobacterium atrosepticum (strain SCRI 1043 / ATCC BAA-672) (Erwinia carotovora subsp. atroseptica)).